The sequence spans 420 residues: MSSETVSYFSHPFPRRQSVGVSVGGVIVGGSAPVVVQSMTNTDTADVDSTVAQVVALHRAGSEIVRITVDRDESAAAVPKIRERLERLGHDVPLVGDFHYIGHKLLADHPACAEALAKYRINPGNVGFKDKKDKQFADIVEMAIRYDKPVRIGVNWGSLDQELLTTLMDRNQAEGAPLSAQDVMREAIVQSALISANLAEEIGLGRDKIILSAKVSQVQDLIAVYTMLAQRSNHALHLGLTEAGMGTKGIVASSAAMGILLQQGIGDTIRISLTPEPGGDRTREVQVAQELLQTMGFRQFVPIVAACPGCGRTTSTVFQELAQTIQEDIRRNMPLWREKYPGVEALSVAVMGCIVNGPGESKHADIGISLPGTGETPSAPVFVDGKKVATLRGPGIAEDFQKMVADYIENRFGLGRKIAS.

Residues Cys307, Cys310, Cys353, and Glu360 each contribute to the [4Fe-4S] cluster site.

It belongs to the IspG family. [4Fe-4S] cluster is required as a cofactor.

It carries out the reaction (2E)-4-hydroxy-3-methylbut-2-enyl diphosphate + oxidized [flavodoxin] + H2O + 2 H(+) = 2-C-methyl-D-erythritol 2,4-cyclic diphosphate + reduced [flavodoxin]. It functions in the pathway isoprenoid biosynthesis; isopentenyl diphosphate biosynthesis via DXP pathway; isopentenyl diphosphate from 1-deoxy-D-xylulose 5-phosphate: step 5/6. Functionally, converts 2C-methyl-D-erythritol 2,4-cyclodiphosphate (ME-2,4cPP) into 1-hydroxy-2-methyl-2-(E)-butenyl 4-diphosphate. This is 4-hydroxy-3-methylbut-2-en-1-yl diphosphate synthase (flavodoxin) from Brucella suis (strain ATCC 23445 / NCTC 10510).